Consider the following 629-residue polypeptide: Sushi domain-containing protein 5 (629 aa).

The N-terminal stretch at 1–35 (MTAEGPSPPARWHRRLPGLWAAALLLLGLPRLSVR) is a signal peptide. The Extracellular segment spans residues 36–574 (ADGKFFVLES…DGCPGLSRGP (539 aa)). The region spanning 39-134 (KFFVLESQNG…GGTYSALCIK (96 aa)) is the Link domain. 3 disulfides stabilise this stretch: C61–C132, C140–C184, and C167–C197. The 62-residue stretch at 138–199 (KPCGDPPSFP…WYGLVQACGK (62 aa)) folds into the Sushi domain. Residues 225–249 (EDSRTEADEDRGQGDSSEEAPKQDR) are compositionally biased toward basic and acidic residues. 2 disordered regions span residues 225 to 252 (EDSR…RLVS) and 344 to 403 (DGPS…GLDE). The chain crosses the membrane as a helical span at residues 575–595 (VIATIVTVLCLLLLLAGVGMV). Over 596–629 (WGYRKCQHKSSVYKLNVGQRQARHYHQQIEMEKV) the chain is Cytoplasmic.

The protein localises to the membrane. This Homo sapiens (Human) protein is Sushi domain-containing protein 5 (SUSD5).